Here is a 510-residue protein sequence, read N- to C-terminus: Protein ERGIC-53 (510 aa).

The signal sequence occupies residues 1 to 30 (MAGSRQRGLRARVRPLFCALLLSLGRFVRG). Residues 31 to 477 (DGVGGDPAVA…ELPPFPSCLS (447 aa)) lie on the Lumenal side of the membrane. One can recognise an L-type lectin-like domain in the interval 44-267 (RRFEYKYSFK…DVLSFLTFQL (224 aa)). The a carbohydrate site is built by S88 and D121. The Ca(2+) site is built by D152, F154, and N156. N156 and H178 together coordinate a carbohydrate. Position 181 (D181) interacts with Ca(2+). C190 and C230 are joined by a disulfide. 251–253 (GGL) contributes to the a carbohydrate binding site. S425 carries the phosphoserine modification. The helical transmembrane segment at 478 to 498 (TVHFIIFVVVQTVLFIGYIMY) threads the bilayer. The Cytoplasmic segment spans residues 499-510 (RSQQEAAAKKFF). Residues 499-510 (RSQQEAAAKKFF) form a mediates interaction with RAB3GAP1, RAB3GAP2 and UBXN6 region. The short motif at 509–510 (FF) is the ER export motif element.

As to quaternary structure, exists both as a covalent disulfide-linked homohexamer, and a complex of three disulfide-linked dimers non-covalently kept together. Interacts with MCFD2. May interact with TMEM115. Interacts with RAB3GAP1 and RAB3GAP2. Interacts with UBXN6. Interacts with SERPINA1/alpha1-antitrypsin. Interacts with BET1. In terms of processing, the N-terminal may be partly blocked. As to expression, ubiquitous.

It localises to the endoplasmic reticulum-Golgi intermediate compartment membrane. Its subcellular location is the golgi apparatus membrane. It is found in the endoplasmic reticulum membrane. Its function is as follows. Mannose-specific lectin. May recognize sugar residues of glycoproteins, glycolipids, or glycosylphosphatidyl inositol anchors and may be involved in the sorting or recycling of proteins, lipids, or both. The LMAN1-MCFD2 complex forms a specific cargo receptor for the ER-to-Golgi transport of selected proteins. The polypeptide is Protein ERGIC-53 (LMAN1) (Homo sapiens (Human)).